We begin with the raw amino-acid sequence, 128 residues long: Mini-ribonuclease 3 (128 aa).

Residue Asp-17 is part of the active site.

It belongs to the MrnC RNase family. As to quaternary structure, homodimer. The cofactor is Mg(2+).

It is found in the cytoplasm. In terms of biological role, involved in correct processing of both the 5' and 3' ends of 23S rRNA precursor. Processes 30S rRNA precursor transcript even in absence of ribonuclease 3 (Rnc); Rnc processes 30S rRNA into smaller rRNA precursors. In Streptococcus pneumoniae (strain ATCC BAA-255 / R6), this protein is Mini-ribonuclease 3.